A 619-amino-acid polypeptide reads, in one-letter code: DNA mismatch repair protein MutL (619 aa).

A disordered region spans residues 339 to 400 (AEKDDPPAPR…GGASWPHAQP (62 aa)).

It belongs to the DNA mismatch repair MutL/HexB family.

Functionally, this protein is involved in the repair of mismatches in DNA. It is required for dam-dependent methyl-directed DNA mismatch repair. May act as a 'molecular matchmaker', a protein that promotes the formation of a stable complex between two or more DNA-binding proteins in an ATP-dependent manner without itself being part of a final effector complex. This is DNA mismatch repair protein MutL from Klebsiella pneumoniae subsp. pneumoniae (strain ATCC 700721 / MGH 78578).